The following is a 603-amino-acid chain: Laccase 1 (603 aa).

A signal peptide spans 1–20 (MSRFARLLLIVALFFTNAWA). Plastocyanin-like domains are found at residues 66 to 108 (QRPI…IHIR) and 159 to 349 (LVVS…MRIP). The Cu cation site is built by His-90 and His-92. 4 N-linked (GlcNAc...) asparagine glycosylation sites follow: Asn-246, Asn-269, Asn-434, and Asn-474. The Plastocyanin-like 3 domain maps to 460–588 (TRDTENDGLV…GGMGIAILDG (129 aa)). Residues His-496, His-499, and His-501 each coordinate Cu cation. Asn-516 is a glycosylation site (N-linked (GlcNAc...) asparagine). The Cu cation site is built by His-570, Cys-571, His-572, and His-576.

It belongs to the multicopper oxidase family. Cu cation serves as cofactor.

It localises to the cell surface. It functions in the pathway pigment biosynthesis. Laccase; part of the Pks1 gene cluster that mediates the biosynthesis of an anthraquinone derivative pigment that contributes to conidial pigmentation that provides protection from UV radiation, heat and cold stress. The polyketide synthase Pks1 produces 1-acetyl-2,4,6,8-tetrahydroxy-9,10-anthraquinone though condensation of acetyl-CoA with malonyl-CoA. The dehydratase EthD and the laccase Mlac1 further convert the anthraquinone derivative into the final conidial pigment. This is Laccase 1 from Metarhizium anisopliae (Entomophthora anisopliae).